Consider the following 459-residue polypeptide: Serine permease SerP1 (459 aa).

12 helical membrane-spanning segments follow: residues 19-39 (IQLIAIAGTIGTGLFLGAGKT), 42-62 (MTGPSVIFAYILIGIAMFFFL), 97-117 (SYWLVIVFVCISELTAIGTYI), 119-139 (FWLPHLPLWLIEIVMLALLFG), 153-173 (FWFAMIKVAAILGMIVTAIIL), 212-232 (FVGALQMVMFAFTSMEFIGMT), 254-274 (ILLFYVGALLAIMAIFNWHYI), 281-301 (FVIVFQLIGIKWAAALINFVV), 341-361 (AGIPINALYMATALSLLAPVL), 370-390 (AFNFAASCTTNLFLVVYFITL), 412-432 (PTIAVPFIAIIFAIVFASLFF), and 436-456 (TFYPALGAIVWTLIFGLYSHF).

This sequence belongs to the amino acid-polyamine-organocation (APC) superfamily. Amino acid transporter (AAT) (TC 2.A.3.1) family.

The protein resides in the cell membrane. Transports L-serine, L-threonine and L-cysteine with high affinity. Stereoselective, with a strong preference for L-serine. Is the main L-serine transporter and is responsible for optimal growth in media containing free amino acids as the sole source of amino acids. Is also the main transporter for L-threonine. The polypeptide is Serine permease SerP1 (Lactococcus lactis subsp. cremoris (strain MG1363)).